We begin with the raw amino-acid sequence, 546 residues long: Chaperonin GroEL 1 (546 aa).

Residues threonine 30–proline 33, lysine 51, aspartate 87–threonine 91, glycine 415, asparagine 479–alanine 481, and aspartate 495 contribute to the ATP site. Residues lysine 526–methionine 546 are disordered. The segment covering glycine 534–methionine 546 has biased composition (gly residues).

It belongs to the chaperonin (HSP60) family. Forms a cylinder of 14 subunits composed of two heptameric rings stacked back-to-back. Interacts with the co-chaperonin GroES.

It is found in the cytoplasm. It catalyses the reaction ATP + H2O + a folded polypeptide = ADP + phosphate + an unfolded polypeptide.. Together with its co-chaperonin GroES, plays an essential role in assisting protein folding. The GroEL-GroES system forms a nano-cage that allows encapsulation of the non-native substrate proteins and provides a physical environment optimized to promote and accelerate protein folding. The polypeptide is Chaperonin GroEL 1 (Burkholderia vietnamiensis (strain G4 / LMG 22486) (Burkholderia cepacia (strain R1808))).